We begin with the raw amino-acid sequence, 885 residues long: Envelope glycoprotein gp160 (885 aa).

The first 23 residues, 1 to 23 (MGCLGNQLLIALLLVSVLEICCV), serve as a signal peptide directing secretion. The Extracellular segment spans residues 24–700 (QYVTVFYGVP…TSWIRYIQYG (677 aa)). An N-linked (GlcNAc...) asparagine; by host glycan is attached at Asn37. A disulfide bridge links Cys44 with Cys57. 17 N-linked (GlcNAc...) asparagine; by host glycosylation sites follow: Asn70, Asn114, Asn148, Asn156, Asn173, Asn186, Asn201, Asn213, Asn245, Asn255, Asn279, Asn285, Asn296, Asn307, Asn317, Asn372, and Asn378. 5 disulfide bridges follow: Cys101–Cys221, Cys108–Cys212, Cys113–Cys170, Cys234–Cys264, and Cys244–Cys256. Residues 113–169 (CNKTETDRWGLTGNAGTTTTAITTTATPSVAENVINESNPCIKNNSCAGLEQEPMIG) form a V1 region. Residues 170 to 212 (CKFNMTGLNRDKKKEYNETWYSRDLICEQSANESESKCYMHHC) form a V2 region. The V3 stretch occupies residues 312–344 (CRRPENKTVLPVTIMSGLVFHSQPINERPKQAW). Cys312 and Cys345 form a disulfide bridge. Cystine bridges form between Cys396–Cys465 and Cys403–Cys438. Residues 403–438 (CKMNWFLNWVEDRDQKGGRWKQQNRKEQQKKNYVPC) are V4. 3 N-linked (GlcNAc...) asparagine; by host glycosylation sites follow: Asn466, Asn482, and Asn485. A V5 region spans residues 481 to 488 (SNETNITM). The fusion peptide stretch occupies residues 532-552 (GVFVLGFLGFLATAGSAMGAA). The immunosuppression stretch occupies residues 595–611 (LQTRVTAIEKYLKDQAQ). Residues Asn631, Asn640, and Asn656 are each glycosylated (N-linked (GlcNAc...) asparagine; by host). The stretch at 640–672 (NMTWQEWERQVDFLEANITQLLEEAQIQQEKNM) forms a coiled coil. Positions 677–698 (KLNSWDIFGNWFDLTSWIRYIQ) are MPER; binding to GalCer. A helical transmembrane segment spans residues 701–721 (VLIVLGVIGLRIVIYVVQMLA). Residues 722–885 (RLRQGYRPVF…IRQGLELTLL (164 aa)) lie on the Cytoplasmic side of the membrane. Positions 727–730 (YRPV) match the YXXV motif; contains endocytosis signal motif. The segment at 743–764 (IHKGQEPPTKEGEEGDGGDRGG) is disordered. Positions 745–764 (KGQEPPTKEGEEGDGGDRGG) are enriched in basic and acidic residues. Residue Cys793 is the site of S-palmitoyl cysteine; by host attachment. A Di-leucine internalization motif motif is present at residues 884 to 885 (LL).

The mature envelope protein (Env) consists of a homotrimer of non-covalently associated gp120-gp41 heterodimers. The resulting complex protrudes from the virus surface as a spike. Interacts with host CD4 and CCR5. Gp120 also interacts with the C-type lectins CD209/DC-SIGN and CLEC4M/DC-SIGNR (collectively referred to as DC-SIGN(R)). As to quaternary structure, the mature envelope protein (Env) consists of a homotrimer of non-covalently associated gp120-gp41 heterodimers. The resulting complex protrudes from the virus surface as a spike. Post-translationally, specific enzymatic cleavages in vivo yield mature proteins. Envelope glycoproteins are synthesized as an inactive precursor that is heavily N-glycosylated and processed likely by host cell furin in the Golgi to yield the mature SU and TM proteins. The cleavage site between SU and TM requires the minimal sequence [KR]-X-[KR]-R. Palmitoylation of the transmembrane protein and of Env polyprotein (prior to its proteolytic cleavage) is essential for their association with host cell membrane lipid rafts. Palmitoylation is therefore required for envelope trafficking to classical lipid rafts, but not for viral replication.

The protein resides in the virion membrane. The protein localises to the host cell membrane. It localises to the host endosome membrane. Functionally, the surface protein gp120 (SU) attaches the virus to the host lymphoid cell by binding to the primary receptor CD4. This interaction induces a structural rearrangement creating a high affinity binding site for a chemokine coreceptor like CCR5. This peculiar 2 stage receptor-interaction strategy allows gp120 to maintain the highly conserved coreceptor-binding site in a cryptic conformation, protected from neutralizing antibodies. These changes are transmitted to the transmembrane protein gp41 and are thought to activate its fusogenic potential by unmasking its fusion peptide. In terms of biological role, surface protein gp120 (SU) may target the virus to gut-associated lymphoid tissue (GALT) by binding host ITGA4/ITGB7 (alpha-4/beta-7 integrins), a complex that mediates T-cell migration to the GALT. Interaction between gp120 and ITGA4/ITGB7 would allow the virus to enter GALT early in the infection, infecting and killing most of GALT's resting CD4+ T-cells. This T-cell depletion is believed to be the major insult to the host immune system leading to AIDS. The surface protein gp120 is a ligand for CD209/DC-SIGN and CLEC4M/DC-SIGNR, which are respectively found on dendritic cells (DCs), and on endothelial cells of liver sinusoids and lymph node sinuses. These interactions allow capture of viral particles at mucosal surfaces by these cells and subsequent transmission to permissive cells. DCs are professional antigen presenting cells, critical for host immunity by inducing specific immune responses against a broad variety of pathogens. They act as sentinels in various tissues where they take up antigen, process it, and present it to T-cells following migration to lymphoid organs. SIV subverts the migration properties of dendritic cells to gain access to CD4+ T-cells in lymph nodes. Virus transmission to permissive T-cells occurs either in trans (without DCs infection, through viral capture and transmission), or in cis (following DCs productive infection, through the usual CD4-gp120 interaction), thereby inducing a robust infection. In trans infection, bound virions remain infectious over days and it is proposed that they are not degraded, but protected in non-lysosomal acidic organelles within the DCs close to the cell membrane thus contributing to the viral infectious potential during DCs' migration from the periphery to the lymphoid tissues. On arrival at lymphoid tissues, intact virions recycle back to DCs' cell surface allowing virus transmission to CD4+ T-cells. Virion capture also seems to lead to MHC-II-restricted viral antigen presentation, and probably to the activation of SIV-specific CD4+ cells. Its function is as follows. The transmembrane protein gp41 (TM) acts as a class I viral fusion protein. Under the current model, the protein has at least 3 conformational states: pre-fusion native state, pre-hairpin intermediate state, and post-fusion hairpin state. During fusion of viral and target intracellular membranes, the coiled coil regions (heptad repeats) assume a trimer-of-hairpins structure, positioning the fusion peptide in close proximity to the C-terminal region of the ectodomain. The formation of this structure appears to drive apposition and subsequent fusion of viral and target cell membranes. Complete fusion occurs in host cell endosomes. The virus undergoes clathrin-dependent internalization long before endosomal fusion, thus minimizing the surface exposure of conserved viral epitopes during fusion and reducing the efficacy of inhibitors targeting these epitopes. Membranes fusion leads to delivery of the nucleocapsid into the cytoplasm. Functionally, the envelope glycoprotein gp160 precursor down-modulates cell surface CD4 antigen by interacting with it in the endoplasmic reticulum and blocking its transport to the cell surface. In terms of biological role, the gp120-gp41 heterodimer allows rapid transcytosis of the virus through CD4 negative cells such as simple epithelial monolayers of the intestinal, rectal and endocervical epithelial barriers. Both gp120 and gp41 specifically recognize glycosphingolipids galactosyl-ceramide (GalCer) or 3' sulfo-galactosyl-ceramide (GalS) present in the lipid rafts structures of epithelial cells. Binding to these alternative receptors allows the rapid transcytosis of the virus through the epithelial cells. This transcytotic vesicle-mediated transport of virions from the apical side to the basolateral side of the epithelial cells does not involve infection of the cells themselves. The polypeptide is Envelope glycoprotein gp160 (env) (Cercopithecidae (Old World monkeys)).